The following is a 268-amino-acid chain: tRNA pseudouridine synthase A (268 aa).

Asp-52 (nucleophile) is an active-site residue. Tyr-110 serves as a coordination point for substrate.

It belongs to the tRNA pseudouridine synthase TruA family. Homodimer.

The catalysed reaction is uridine(38/39/40) in tRNA = pseudouridine(38/39/40) in tRNA. Functionally, formation of pseudouridine at positions 38, 39 and 40 in the anticodon stem and loop of transfer RNAs. In Prochlorococcus marinus (strain MIT 9301), this protein is tRNA pseudouridine synthase A.